Consider the following 493-residue polypeptide: (+)-menthofuran synthase (493 aa).

Residue Met1 is a topological domain, cytoplasmic. Residues 2–19 (AALLVFFSVSLILLAVLF) form a helical; Signal-anchor for type II membrane protein membrane-spanning segment. Over 20–493 (HKRKSSLSSR…LLVLATPRQS (474 aa)) the chain is Lumenal. The N-linked (GlcNAc...) asparagine glycan is linked to Asn169. Position 434 (Cys434) interacts with heme.

It belongs to the cytochrome P450 family. It depends on heme as a cofactor.

It is found in the membrane. It carries out the reaction (R)-pulegone + reduced [NADPH--hemoprotein reductase] + O2 = (R)-menthofuran + oxidized [NADPH--hemoprotein reductase] + 2 H2O + H(+). The protein operates within secondary metabolite biosynthesis; terpenoid biosynthesis. Monoterpene synthase that catalyzes the formation of (+)-menthofuran from (+)-pulegone. This is (+)-menthofuran synthase from Mentha piperita (Peppermint).